The following is a 251-amino-acid chain: 5'-nucleotidase SurE (251 aa).

Positions 8, 9, 39, and 91 each coordinate a divalent metal cation.

The protein belongs to the SurE nucleotidase family. A divalent metal cation is required as a cofactor.

The protein resides in the cytoplasm. The enzyme catalyses a ribonucleoside 5'-phosphate + H2O = a ribonucleoside + phosphate. Functionally, nucleotidase that shows phosphatase activity on nucleoside 5'-monophosphates. This chain is 5'-nucleotidase SurE, found in Methylococcus capsulatus (strain ATCC 33009 / NCIMB 11132 / Bath).